We begin with the raw amino-acid sequence, 344 residues long: Heat-inducible transcription repressor HrcA (344 aa).

This sequence belongs to the HrcA family.

Negative regulator of class I heat shock genes (grpE-dnaK-dnaJ and groELS operons). Prevents heat-shock induction of these operons. The sequence is that of Heat-inducible transcription repressor HrcA from Streptococcus uberis (strain ATCC BAA-854 / 0140J).